The sequence spans 497 residues: Acetyl-coenzyme A carboxylase carboxyl transferase subunit beta, chloroplastic (497 aa).

One can recognise a CoA carboxyltransferase N-terminal domain in the interval 230–497 (LWVQCENCYG…FFPVNSNSIK (268 aa)). Zn(2+) is bound by residues Cys-234, Cys-237, Cys-253, and Cys-256. The segment at 234 to 256 (CENCYGLNYKKFFRSKFNICEQC) adopts a C4-type zinc-finger fold.

This sequence belongs to the AccD/PCCB family. Acetyl-CoA carboxylase is a heterohexamer composed of biotin carboxyl carrier protein, biotin carboxylase and 2 subunits each of ACCase subunit alpha and ACCase plastid-coded subunit beta (accD). It depends on Zn(2+) as a cofactor.

Its subcellular location is the plastid. The protein resides in the chloroplast stroma. The enzyme catalyses N(6)-carboxybiotinyl-L-lysyl-[protein] + acetyl-CoA = N(6)-biotinyl-L-lysyl-[protein] + malonyl-CoA. It functions in the pathway lipid metabolism; malonyl-CoA biosynthesis; malonyl-CoA from acetyl-CoA: step 1/1. Its function is as follows. Component of the acetyl coenzyme A carboxylase (ACC) complex. Biotin carboxylase (BC) catalyzes the carboxylation of biotin on its carrier protein (BCCP) and then the CO(2) group is transferred by the transcarboxylase to acetyl-CoA to form malonyl-CoA. This Nandina domestica (Heavenly bamboo) protein is Acetyl-coenzyme A carboxylase carboxyl transferase subunit beta, chloroplastic.